A 243-amino-acid chain; its full sequence is Triosephosphate isomerase (243 aa).

9-11 (NWK) contacts substrate. Catalysis depends on H96, which acts as the Electrophile. The Proton acceptor role is filled by E165. Substrate-binding positions include G171, S204, and 225 to 226 (GG).

This sequence belongs to the triosephosphate isomerase family. Homodimer.

It is found in the cytoplasm. The catalysed reaction is D-glyceraldehyde 3-phosphate = dihydroxyacetone phosphate. Its pathway is carbohydrate biosynthesis; gluconeogenesis. It participates in carbohydrate degradation; glycolysis; D-glyceraldehyde 3-phosphate from glycerone phosphate: step 1/1. Its function is as follows. Involved in the gluconeogenesis. Catalyzes stereospecifically the conversion of dihydroxyacetone phosphate (DHAP) to D-glyceraldehyde-3-phosphate (G3P). In Synechococcus sp. (strain CC9311), this protein is Triosephosphate isomerase.